We begin with the raw amino-acid sequence, 674 residues long: MKVKRKIFWGALITLGIVYGDIGTSPLYVMKALIMDAGGLNGLTEDYIIGCLSLVFWTLMLMTTIKYVLIALRADNHGEGGIFALYALVRNKKKWLILPALLGGAALLADGTLTPAVTVTSAIEGLKGISIGSQPWINTQLEVNLVTFVILLVLFLIQRFGTSFIGKAFGPLMLLWFSFLAIFGIVNLIHEPLVLRALSPHYGLMLLFSPANKVGIFILGSVFLATTGAEALYSDMGHVGKRSIYLTWPFVCGALVLNYFGQGAYLIKNLGNFKTTGDIFNPFYEMLPSSVYLFGVLISTIAAIIASQALITGSFTLVEEAVGLKLLPKMKVEHPSLSRGQIYIRTINWSLCICTLLVLVYFRTSERMEAAYGLAITITMLMTTILLSQYLKDKVNVVFNGIFLAVFLSVELIFLISSLTKFTHGGYVTLLITLLILLIMVIWYFGNKLRDYLSDEEEWVSLRDYKDVLQELSNDDRIPLYISNLVMLTKVDKRTYKVKRETLYSILDKSPKKAKVYWFVTVNTTSDPYTNYYTVDMMGTRNIVNLQLYLGFKMDHRVNLYLRQVVEDLIENDIIDEQPQKYTTMPGRKIGDFRFIIIQELLSPNTRVRGWQHLLISARIFIQNHSTNPIQWFGLEFSEVKVEKVPLLLKKRRIPAMEQRMILNPKDVKRSTKE.

Transmembrane regions (helical) follow at residues 7 to 27 (IFWG…TSPL), 52 to 72 (LSLV…LIAL), 95 to 115 (WLIL…TLTP), 145 to 165 (LVTF…TSFI), 169 to 189 (FGPL…VNLI), 204 to 224 (LMLL…SVFL), 244 to 264 (IYLT…GQGA), 291 to 311 (VYLF…QALI), 342 to 362 (IYIR…LVYF), 368 to 388 (MEAA…ILLS), 397 to 417 (VVFN…FLIS), and 425 to 445 (GGYV…IWYF).

The protein belongs to the HAK/KUP transporter (TC 2.A.72) family.

Its subcellular location is the cell membrane. It catalyses the reaction K(+)(in) + H(+)(in) = K(+)(out) + H(+)(out). In terms of biological role, transport of potassium into the cell. Likely operates as a K(+):H(+) symporter. The polypeptide is Probable potassium transport system protein Kup (Ligilactobacillus salivarius (strain UCC118) (Lactobacillus salivarius)).